The primary structure comprises 356 residues: Phospho-2-dehydro-3-deoxyheptonate aldolase, Tyr-sensitive (356 aa).

This sequence belongs to the class-I DAHP synthase family. Requires a divalent metal cation as cofactor.

It catalyses the reaction D-erythrose 4-phosphate + phosphoenolpyruvate + H2O = 7-phospho-2-dehydro-3-deoxy-D-arabino-heptonate + phosphate. Its pathway is metabolic intermediate biosynthesis; chorismate biosynthesis; chorismate from D-erythrose 4-phosphate and phosphoenolpyruvate: step 1/7. With respect to regulation, specifically feedback inhibited by tyrosine with 50% inhibition observed at 9 microM tyrosine, pH 7.0. Functionally, stereospecific condensation of phosphoenolpyruvate (PEP) and D-erythrose-4-phosphate (E4P) giving rise to 3-deoxy-D-arabino-heptulosonate-7-phosphate (DAHP). This chain is Phospho-2-dehydro-3-deoxyheptonate aldolase, Tyr-sensitive (aroF), found in Escherichia coli (strain K12).